Consider the following 71-residue polypeptide: Small ribosomal subunit protein bS21 (71 aa).

The protein belongs to the bacterial ribosomal protein bS21 family.

This Ruthia magnifica subsp. Calyptogena magnifica protein is Small ribosomal subunit protein bS21.